Consider the following 597-residue polypeptide: Elongation factor 4 (597 aa).

A tr-type G domain is found at 2–184 (QHIRNFSIIA…TIVARVPAPQ (183 aa)). Residues 14 to 19 (DHGKST) and 131 to 134 (NKMD) each bind GTP.

Belongs to the TRAFAC class translation factor GTPase superfamily. Classic translation factor GTPase family. LepA subfamily.

Its subcellular location is the cell inner membrane. It catalyses the reaction GTP + H2O = GDP + phosphate + H(+). Functionally, required for accurate and efficient protein synthesis under certain stress conditions. May act as a fidelity factor of the translation reaction, by catalyzing a one-codon backward translocation of tRNAs on improperly translocated ribosomes. Back-translocation proceeds from a post-translocation (POST) complex to a pre-translocation (PRE) complex, thus giving elongation factor G a second chance to translocate the tRNAs correctly. Binds to ribosomes in a GTP-dependent manner. This Bordetella petrii (strain ATCC BAA-461 / DSM 12804 / CCUG 43448) protein is Elongation factor 4.